We begin with the raw amino-acid sequence, 377 residues long: G-protein coupled receptor 54 (377 aa).

At 1–49 the chain is on the extracellular side; sequence MYSSEELWNSTEQVWINGSGTNFSLGRHEDDEEEEGDKHPFFTDAWLVP. 3 N-linked (GlcNAc...) asparagine glycosylation sites follow: asparagine 9, asparagine 17, and asparagine 22. A helical transmembrane segment spans residues 50–70; sequence LFFSLIMLVGLVGNSLVIYVI. Topologically, residues 71-91 are cytoplasmic; that stretch reads SKHRQMRTATNFYIANLAATD. Residues 92 to 112 form a helical membrane-spanning segment; it reads IIFLVCCVPFTATLYPLPGWI. Residues 113 to 119 lie on the Extracellular side of the membrane; sequence FGNFMCK. Cysteine 118 and cysteine 198 are joined by a disulfide. A helical transmembrane segment spans residues 120 to 140; that stretch reads FVAFLQQVTVQATCITLTAMS. The Cytoplasmic segment spans residues 141–160; the sequence is GDRCYVTVYPLKSLRHRTPK. Residues 161 to 181 form a helical membrane-spanning segment; sequence VAMIVSICIWIGSFVLSTPIL. Residues 182 to 209 are Extracellular-facing; it reads MYQRIEEGYWYGPRQYCMERFPSKTHER. Residues 210–230 traverse the membrane as a helical segment; it reads AFILYQFIAAYLLPVLTISFC. At 231–269 the chain is on the cytoplasmic side; that stretch reads YTLMVKRVGQPTVEPVDNNYQVNLLSERTISIRSKVSKM. A helical membrane pass occupies residues 270–290; that stretch reads VVVIVLLFAICWGPIQIFVLF. Topologically, residues 291-305 are extracellular; the sequence is QSFYPNYQPNYATYK. A helical membrane pass occupies residues 306 to 328; sequence IKTWANCMSYANSSVNPIVYGFM. Residues 329 to 377 are Cytoplasmic-facing; it reads GASFQKSFRKTFPFLFKHKVRDSSMASRTANAEIKFVAAEEGNNNNAVN.

The protein belongs to the G-protein coupled receptor 1 family. As to expression, expressed in a significantly high percentage (45-60%) of mature GnRH1, GnRH2, and GnRH3 neurons and in immature GnRH3 neurons, which had migrated to the vicinity of their final locations in the brain. Only 5% of immature GnRH1 and GnRH2 neurons have receptor transcripts.

The protein localises to the cell membrane. In terms of biological role, receptor speculated to be essential for sexual development. May regulate gonadotropin-releasing hormone (GnRH) secretion. The receptor expression could be a 'stop signal' for GnRH1, GnRH2, and GnRH3 neuronal migration, leading to suppression of cell growth and modulation of GnRH secretion, which is important for normal sexual development. This chain is G-protein coupled receptor 54 (gpr54), found in Oreochromis niloticus (Nile tilapia).